Here is a 380-residue protein sequence, read N- to C-terminus: Cytochrome b (380 aa).

4 helical membrane passes run 34-54, 78-99, 114-134, and 179-199; these read FGSL…LLAA, WLIR…YLHI, WNIG…GYVL, and FFAL…VHLT. The heme b site is built by His-84 and His-98. Heme b is bound by residues His-183 and His-197. His-202 lines the a ubiquinone pocket. The next 4 helical transmembrane spans lie at 227 to 247, 289 to 309, 321 to 341, and 348 to 368; these read IKDI…ALFS, LGGV…PLLH, LSQI…WVGS, and FIII…VLFP.

The protein belongs to the cytochrome b family. As to quaternary structure, the cytochrome bc1 complex contains 11 subunits: 3 respiratory subunits (MT-CYB, CYC1 and UQCRFS1), 2 core proteins (UQCRC1 and UQCRC2) and 6 low-molecular weight proteins (UQCRH/QCR6, UQCRB/QCR7, UQCRQ/QCR8, UQCR10/QCR9, UQCR11/QCR10 and a cleavage product of UQCRFS1). This cytochrome bc1 complex then forms a dimer. Heme b is required as a cofactor.

Its subcellular location is the mitochondrion inner membrane. In terms of biological role, component of the ubiquinol-cytochrome c reductase complex (complex III or cytochrome b-c1 complex) that is part of the mitochondrial respiratory chain. The b-c1 complex mediates electron transfer from ubiquinol to cytochrome c. Contributes to the generation of a proton gradient across the mitochondrial membrane that is then used for ATP synthesis. The polypeptide is Cytochrome b (MT-CYB) (Paradisaea rubra (Red bird of paradise)).